Consider the following 162-residue polypeptide: Sec-independent protein translocase protein TatB (162 aa).

Residues 1-21 (MFDIGFLEIIVIMVIALIVIG) form a helical membrane-spanning segment. The tract at residues 86–162 (IQDEFGIDQE…ESTPESSNKS (77 aa)) is disordered. A compositionally biased stretch (polar residues) spans 108–117 (FSGTQFNKAP). Low complexity predominate over residues 123 to 135 (PTTEESPSSTPET). Over residues 147-162 (DVSAPSESTPESSNKS) the composition is skewed to polar residues.

It belongs to the TatB family. As to quaternary structure, the Tat system comprises two distinct complexes: a TatABC complex, containing multiple copies of TatA, TatB and TatC subunits, and a separate TatA complex, containing only TatA subunits. Substrates initially bind to the TatABC complex, which probably triggers association of the separate TatA complex to form the active translocon.

The protein resides in the cell inner membrane. Functionally, part of the twin-arginine translocation (Tat) system that transports large folded proteins containing a characteristic twin-arginine motif in their signal peptide across membranes. Together with TatC, TatB is part of a receptor directly interacting with Tat signal peptides. TatB may form an oligomeric binding site that transiently accommodates folded Tat precursor proteins before their translocation. This chain is Sec-independent protein translocase protein TatB, found in Hydrogenovibrio crunogenus (strain DSM 25203 / XCL-2) (Thiomicrospira crunogena).